A 254-amino-acid polypeptide reads, in one-letter code: Uracil-DNA glycosylase (254 aa).

The active-site Proton acceptor is the Asp91.

This sequence belongs to the uracil-DNA glycosylase (UDG) superfamily. UNG family.

It localises to the host nucleus. It catalyses the reaction Hydrolyzes single-stranded DNA or mismatched double-stranded DNA and polynucleotides, releasing free uracil.. Its function is as follows. Excises uracil residues from the DNA which can arise as a result of misincorporation of dUMP residues by DNA polymerase or deamination of cytosines. Therefore may reduce deleterious uracil incorporation into the viral genome, particularly in terminally differentiated cells which lack DNA repair enzymes. The protein is Uracil-DNA glycosylase (U81) of Homo sapiens (Human).